Here is a 497-residue protein sequence, read N- to C-terminus: Cytochrome P450 26A1 (497 aa).

Cys-442 contributes to the heme binding site.

The protein belongs to the cytochrome P450 family. Heme is required as a cofactor. In terms of tissue distribution, expressed in most fetal and adult tissues with highest levels in adult liver, heart, pituitary gland, adrenal gland, placenta and regions of the brain. Expressed at high levels in lung, pancreas, skin and uterus (at protein level). Lower expression level is detected in spleen, kidney, intestine and adipose tissue (at protein level).

The protein resides in the endoplasmic reticulum membrane. It is found in the microsome membrane. It catalyses the reaction all-trans-retinoate + reduced [NADPH--hemoprotein reductase] + O2 = all-trans-(4S)-hydroxyretinoate + oxidized [NADPH--hemoprotein reductase] + H2O + H(+). The catalysed reaction is all-trans-(4S)-hydroxyretinoate + reduced [NADPH--hemoprotein reductase] + O2 = all-trans-(4S,16)-dihydroxyretinoate + oxidized [NADPH--hemoprotein reductase] + H2O + H(+). It carries out the reaction all-trans-retinoate + reduced [NADPH--hemoprotein reductase] + O2 = all-trans-18-hydroxyretinoate + oxidized [NADPH--hemoprotein reductase] + H2O + H(+). Functionally, a cytochrome P450 monooxygenase involved in the metabolism of retinoates (RAs), the active metabolites of vitamin A, and critical signaling molecules in animals. RAs exist as at least four different isomers: all-trans-RA (atRA), 9-cis-RA, 13-cis-RA, and 9,13-dicis-RA, where atRA is considered to be the biologically active isomer, although 9-cis-RA and 13-cis-RA also have activity. Catalyzes the hydroxylation of atRA primarily at C-4 and C-18, thereby contributing to the regulation of atRA homeostasis and signaling. Hydroxylation of atRA limits its biological activity and initiates a degradative process leading to its eventual elimination. Involved in the convertion of atRA to all-trans-4-oxo-RA. Able to metabolize other RAs such as 9-cis, 13-cis and 9,13-di-cis RA. Can oxidize all-trans-13,14-dihydroretinoate (DRA) to metabolites which could include all-trans-4-oxo-DRA, all-trans-4-hydroxy-DRA, all-trans-5,8-epoxy-DRA, and all-trans-18-hydroxy-DRA. May play a role in the oxidative metabolism of xenobiotics such as tazarotenic acid. The polypeptide is Cytochrome P450 26A1 (Homo sapiens (Human)).